Here is a 258-residue protein sequence, read N- to C-terminus: 5'-nucleotidase SurE (258 aa).

Positions 8, 9, 39, and 95 each coordinate a divalent metal cation.

Belongs to the SurE nucleotidase family. A divalent metal cation serves as cofactor.

The protein resides in the cytoplasm. It carries out the reaction a ribonucleoside 5'-phosphate + H2O = a ribonucleoside + phosphate. In terms of biological role, nucleotidase that shows phosphatase activity on nucleoside 5'-monophosphates. The sequence is that of 5'-nucleotidase SurE from Methanobrevibacter smithii (strain ATCC 35061 / DSM 861 / OCM 144 / PS).